A 472-amino-acid polypeptide reads, in one-letter code: MTVETFKPKQTTTLDTPAKTLEAASTNAVTTGNRIGFVSLGCPKNLVDSERILTQLRIDGYEVTNSYDNADLVIVNTCGFIDAAVEESLDAVREALEENGKVIVTGCLGAKENQIREVHPDVLEITGPHSYEAVLKHVHKYVPKPEHNPFTSLIPQTGVKLTPKHYAYLKISEGCDNRCTFCIIPSLRGDLDSRPAGSILDEAKRLVESGVQEILVVSQDTSAYGKDKGGRTDFWDGMPVKQDITSLARQLGKMGAWVRLHYIYPYPWVDDLIPLMAEGLILPYLDIPMQHASPRILKMMKRPGRVDRQLEAIQRWREICPDLVIRSTFIVGFPGETEEDFQILLDFLKEARLDRVGCFKYSEVDGAVANTIAELISEEVKEDRYHRFMELQAEISAERLARFVGRTLDILIDDVDEEGAIGRSFADAPEIDGMVFINGETELEPGMLVRARITHSDEHDLWAEVVDADTQD.

The MTTase N-terminal domain occupies 33-143 (NRIGFVSLGC…VLKHVHKYVP (111 aa)). Residues Cys42, Cys78, Cys107, Cys175, Cys179, and Cys182 each contribute to the [4Fe-4S] cluster site. In terms of domain architecture, Radical SAM core spans 161-398 (LTPKHYAYLK…MELQAEISAE (238 aa)). Residues 401 to 467 (ARFVGRTLDI…EHDLWAEVVD (67 aa)) enclose the TRAM domain.

Belongs to the methylthiotransferase family. RimO subfamily. The cofactor is [4Fe-4S] cluster.

The protein resides in the cytoplasm. The enzyme catalyses L-aspartate(89)-[ribosomal protein uS12]-hydrogen + (sulfur carrier)-SH + AH2 + 2 S-adenosyl-L-methionine = 3-methylsulfanyl-L-aspartate(89)-[ribosomal protein uS12]-hydrogen + (sulfur carrier)-H + 5'-deoxyadenosine + L-methionine + A + S-adenosyl-L-homocysteine + 2 H(+). Functionally, catalyzes the methylthiolation of an aspartic acid residue of ribosomal protein uS12. This Shewanella sp. (strain W3-18-1) protein is Ribosomal protein uS12 methylthiotransferase RimO.